The sequence spans 589 residues: Phenylalanine--tRNA ligase beta subunit (589 aa).

The B5 domain maps to 290 to 368; that stretch reads LNPTCFKADI…IAYGYDNLKH (79 aa). 4 residues coordinate Mg(2+): D346, D352, E355, and D356.

It belongs to the phenylalanyl-tRNA synthetase beta subunit family. Type 2 subfamily. As to quaternary structure, tetramer of two alpha and two beta subunits. It depends on Mg(2+) as a cofactor.

The protein resides in the cytoplasm. It is found in the nucleus. The catalysed reaction is tRNA(Phe) + L-phenylalanine + ATP = L-phenylalanyl-tRNA(Phe) + AMP + diphosphate + H(+). The protein is Phenylalanine--tRNA ligase beta subunit (frs1) of Schizosaccharomyces pombe (strain 972 / ATCC 24843) (Fission yeast).